The sequence spans 250 residues: Phosphoribosylaminoimidazole-succinocarboxamide synthase (250 aa).

This sequence belongs to the SAICAR synthetase family.

It catalyses the reaction 5-amino-1-(5-phospho-D-ribosyl)imidazole-4-carboxylate + L-aspartate + ATP = (2S)-2-[5-amino-1-(5-phospho-beta-D-ribosyl)imidazole-4-carboxamido]succinate + ADP + phosphate + 2 H(+). It participates in purine metabolism; IMP biosynthesis via de novo pathway; 5-amino-1-(5-phospho-D-ribosyl)imidazole-4-carboxamide from 5-amino-1-(5-phospho-D-ribosyl)imidazole-4-carboxylate: step 1/2. The sequence is that of Phosphoribosylaminoimidazole-succinocarboxamide synthase from Synechococcus sp. (strain CC9605).